Reading from the N-terminus, the 187-residue chain is 1,6-anhydro-N-acetylmuramyl-L-alanine amidase AmpD (187 aa).

The 139-residue stretch at 29-167 (TLLVVHNISL…APERKTDPGP (139 aa)) folds into the N-acetylmuramoyl-L-alanine amidase domain. His-34 is a binding site for Zn(2+). The active-site Proton acceptor is the Glu-116. Zn(2+) is bound by residues His-154 and Asp-164.

It belongs to the N-acetylmuramoyl-L-alanine amidase 2 family. Zn(2+) serves as cofactor.

It localises to the cytoplasm. It carries out the reaction Hydrolyzes the link between N-acetylmuramoyl residues and L-amino acid residues in certain cell-wall glycopeptides.. Involved in cell wall peptidoglycan recycling. Specifically cleaves the amide bond between the lactyl group of N-acetylmuramic acid and the alpha-amino group of the L-alanine in degradation products containing an anhydro N-acetylmuramyl moiety. This is 1,6-anhydro-N-acetylmuramyl-L-alanine amidase AmpD from Enterobacter cloacae.